The following is a 414-amino-acid chain: 26S proteasome regulatory subunit 8 homolog (414 aa).

Residue 197 to 204 (GPPGTGKT) coordinates ATP.

It belongs to the AAA ATPase family.

Its subcellular location is the cytoplasm. It localises to the nucleus. Functionally, the 26S proteasome is involved in the ATP-dependent degradation of ubiquitinated proteins. The regulatory (or ATPase) complex confers ATP dependency and substrate specificity to the 26S complex. The sequence is that of 26S proteasome regulatory subunit 8 homolog from Naegleria fowleri (Brain eating amoeba).